A 503-amino-acid polypeptide reads, in one-letter code: Pre-glycoprotein polyprotein GP complex (503 aa).

G2 carries N-myristoyl glycine; by host lipidation. The Extracellular segment spans residues 2–17 (GQIVTLIQSIPEVLQE). The helical transmembrane segment at 18-33 (VFNVALIIVSVLCIVK) threads the bilayer. Topologically, residues 34-58 (GFVNLMRCGLFQLVTFLILSGRSCD) are cytoplasmic. C57 contributes to the Zn(2+) binding site. Topologically, residues 59-446 (SMMIDRRHNL…QGKTPLALTD (388 aa)) are extracellular. 4 cysteine pairs are disulfide-bonded: C86/C248, C293/C306, C315/C324, and C378/C399. N89, N111, N181, and N241 each carry an N-linked (GlcNAc...) asparagine; by host glycan. 4 N-linked (GlcNAc...) asparagine; by host glycosylation sites follow: N379, N387, N404, and N409. Residues 447–467 (ICFWSLVFYTITVFLHIVGIP) form a helical membrane-spanning segment. Residues 468-503 (THRHIIGDGCPKPHRITRNSLCSCGYYKYQRNLTNG) are Cytoplasmic-facing. Zn(2+) contacts are provided by H469, H471, C477, H481, C489, and C491.

Belongs to the arenaviridae GPC protein family. As to quaternary structure, interacts with glycoprotein G2. Part of the GP complex (GP-C) together with glycoprotein G1 and glycoprotein G2. The GP-complex interacts with protein Z, which interacts with ribonucleocapsid; these interactions may induce virion budding. In terms of assembly, homotrimer; disulfide-linked. In pre-fusion state, G1 homotrimers bind G2 homotrimers via ionic interactions. Part of the GP complex (GP-C) together with glycoprotein G2 and the stable signal peptide. The GP-complex interacts with protein Z, which interacts with ribonucleocapsid; these interactions may induce virion budding. Homotrimer. Interacts with the stable signal peptide. In pre-fusion state, G2 homotrimers bind G1 homotrimers via ionic interactions. Part of the GP complex (GP-C) together with glycoprotein G1 and the stable signal peptide. Acidification in the endosome triggers rearrangements, which ultimately leads to a 6 helix bundle formed by the two heptad repeat domains (HR1 and HR2) in post-fusion state. The GP-complex interacts with protein Z, which interacts with ribonucleocapsid; these interactions may induce virion budding. Specific enzymatic cleavages in vivo yield mature proteins. GP-C polyprotein is cleaved in the endoplasmic reticulum by the host protease MBTPS1. Only cleaved glycoprotein is incorporated into virions. Post-translationally, the SSP remains stably associated with the GP complex following cleavage by signal peptidase and plays crucial roles in the trafficking of GP through the secretory pathway. In terms of processing, myristoylation is necessary for GP2-mediated fusion activity.

It localises to the virion membrane. It is found in the host endoplasmic reticulum membrane. The protein resides in the host Golgi apparatus membrane. The protein localises to the host cell membrane. Functionally, functions as a cleaved signal peptide that is retained as the third component of the GP complex (GP-C). Helps to stabilize the spike complex in its native conformation. The SSP is required for efficient glycoprotein expression, post-translational maturation cleavage of G1 and G2, glycoprotein transport to the cell surface plasma membrane, formation of infectious virus particles, and acid pH-dependent glycoprotein-mediated cell fusion. In terms of biological role, forms the virion spikes together with glycoprotein G2. The glycoprotein spike trimers are connected to the underlying matrix. Interacts with the host receptor leading to virus endocytosis. Its function is as follows. Forms the virion spikes together with glycoprotein G1. The glycoprotein spike trimers are connected to the underlying matrix. Class I viral fusion protein that directs fusion of viral and host endosomal membranes, leading to delivery of the nucleocapsid into the cytoplasm. Membrane fusion is mediated by irreversible conformational changes induced by acidification. This Cavia cutleri (Guinea pig) protein is Pre-glycoprotein polyprotein GP complex.